The primary structure comprises 343 residues: Cell division protein ZipA (343 aa).

Residues 1 to 4 (MDLN) are Periplasmic-facing. The chain crosses the membrane as a helical span at residues 5-25 (TILIILGILALIGLVAHGIWS). Residues 26 to 343 (NRREKSQYFD…MAEAAYLARV (318 aa)) lie on the Cytoplasmic side of the membrane. The disordered stretch occupies residues 39-98 (AFHRNPQSTGRPSAQASQPMTPNFAQPAKETEQIRQTYQEPQVRQMSSSPEQQTRPTAQA). 2 stretches are compositionally biased toward polar residues: residues 43–62 (NPQS…TPNF) and 72–95 (IRQT…TRPT).

It belongs to the ZipA family. Interacts with FtsZ via their C-terminal domains.

The protein localises to the cell inner membrane. In terms of biological role, essential cell division protein that stabilizes the FtsZ protofilaments by cross-linking them and that serves as a cytoplasmic membrane anchor for the Z ring. Also required for the recruitment to the septal ring of downstream cell division proteins. The chain is Cell division protein ZipA from Actinobacillus succinogenes (strain ATCC 55618 / DSM 22257 / CCUG 43843 / 130Z).